The primary structure comprises 222 residues: MIF4G domain-containing protein (222 aa).

The MIF4G domain maps to 3 to 205 (EASRDEYKIQ…LEIIEFRAAG (203 aa)).

This sequence belongs to the MIF4GD family. Interacts with EIF4G1, EIF4G2 and SLBP; probably tethered by SLBP to the 3'-end of mRNAs ending with the histone stem-loop, it also interacts with EIF4G1 which is bound to their 5'-end.

It localises to the cytoplasm. It is found in the nucleus. Its function is as follows. Functions in replication-dependent translation of histone mRNAs which differ from other eukaryotic mRNAs in that they do not end with a poly-A tail but a stem-loop. May participate in circularizing those mRNAs specifically enhancing their translation. The protein is MIF4G domain-containing protein (Mif4gd) of Rattus norvegicus (Rat).